The following is a 409-amino-acid chain: LL-diaminopimelate aminotransferase (409 aa).

Residues tyrosine 15 and glycine 42 each contribute to the substrate site. Pyridoxal 5'-phosphate-binding positions include tyrosine 72, 108-109 (SK), tyrosine 132, asparagine 187, tyrosine 218, and 246-248 (SFS). Residues lysine 109, tyrosine 132, and asparagine 187 each coordinate substrate. Position 249 is an N6-(pyridoxal phosphate)lysine (lysine 249). Positions 257 and 292 each coordinate pyridoxal 5'-phosphate. Positions 292 and 388 each coordinate substrate.

Belongs to the class-I pyridoxal-phosphate-dependent aminotransferase family. LL-diaminopimelate aminotransferase subfamily. In terms of assembly, homodimer. The cofactor is pyridoxal 5'-phosphate.

It carries out the reaction (2S,6S)-2,6-diaminopimelate + 2-oxoglutarate = (S)-2,3,4,5-tetrahydrodipicolinate + L-glutamate + H2O + H(+). It functions in the pathway amino-acid biosynthesis; L-lysine biosynthesis via DAP pathway; LL-2,6-diaminopimelate from (S)-tetrahydrodipicolinate (aminotransferase route): step 1/1. Involved in the synthesis of meso-diaminopimelate (m-DAP or DL-DAP), required for both lysine and peptidoglycan biosynthesis. Catalyzes the direct conversion of tetrahydrodipicolinate to LL-diaminopimelate. The protein is LL-diaminopimelate aminotransferase of Acaryochloris marina (strain MBIC 11017).